Reading from the N-terminus, the 730-residue chain is Zinc finger protein 615 (730 aa).

The KRAB domain occupies 7-78 (LTLEDVAVDF…EDEIYSRICF (72 aa)). C2H2-type zinc fingers lie at residues 203–225 (HVCS…QRVH), 231–253 (HVCS…QRTH), 259–281 (YECT…QKTH), 287–309 (YTCS…QRTH), 315–337 (HGCS…QKTH), 343–365 (YICS…HRTH), 371–393 (FICN…QQTH), 399–421 (YTCS…QRTH), 427–449 (YKCN…QRTH), 455–477 (YVCT…QRTH), 483–505 (YICN…QRTH), 511–533 (YVCG…QRTH), 539–561 (YICD…RRTH), 567–589 (YVCS…QRTH), 595–617 (YICN…QQTH), 623–645 (YKCN…QRFH), 651–673 (FACT…QRIH), 679–701 (YKCS…QRKH), and 707–729 (YGCS…KRIH).

The protein belongs to the krueppel C2H2-type zinc-finger protein family.

Its subcellular location is the nucleus. Functionally, may be involved in transcriptional regulation. This chain is Zinc finger protein 615 (ZNF615), found in Pongo abelii (Sumatran orangutan).